A 165-amino-acid chain; its full sequence is MYCPFCRNPDSRVVDSRMADDGSAIRRRRQCPECGRRFTTVETTSLTVIKRSGVGEPFSRSKVINGVRKACQGRPVTEDDLAMLAQEVEETIRASGAAEIEAHEVGLAILSPLQKLDEVAYLRFASVYQAFESLEDFETAISILRHEAEVEAKAAKGKSSEKSPL.

A zinc finger lies at 3–34 (CPFCRNPDSRVVDSRMADDGSAIRRRRQCPEC). Residues 46–136 (LTVIKRSGVG…VYQAFESLED (91 aa)) form the ATP-cone domain.

Belongs to the NrdR family. It depends on Zn(2+) as a cofactor.

Negatively regulates transcription of bacterial ribonucleotide reductase nrd genes and operons by binding to NrdR-boxes. The sequence is that of Transcriptional repressor NrdR from Arthrobacter sp. (strain FB24).